The following is a 293-amino-acid chain: Probable endonuclease 4 (293 aa).

Zn(2+)-binding residues include His75, His115, Glu153, Asp187, His190, His224, Asp237, His239, and Glu269.

Belongs to the AP endonuclease 2 family. Requires Zn(2+) as cofactor.

It carries out the reaction Endonucleolytic cleavage to 5'-phosphooligonucleotide end-products.. Endonuclease IV plays a role in DNA repair. It cleaves phosphodiester bonds at apurinic or apyrimidinic (AP) sites, generating a 3'-hydroxyl group and a 5'-terminal sugar phosphate. In Chlamydia pneumoniae (Chlamydophila pneumoniae), this protein is Probable endonuclease 4.